A 214-amino-acid polypeptide reads, in one-letter code: Killer cell lectin-like receptor subfamily B member 1 (214 aa).

The Cytoplasmic portion of the chain corresponds to 1–42 (MDAPVLYAELHLANTQGLRCTSPPSPRQDACWGSGWHRVALK). Residues 43 to 63 (LGCVGLILLLMGLSVLVGFLV) traverse the membrane as a helical; Signal-anchor for type II membrane protein segment. Over 64-214 (QKPPIEKCSV…WICQKTLKRV (151 aa)) the chain is Extracellular. The C-type lectin domain occupies 98-208 (HWNKCLFISQ…CSSDNHWICQ (111 aa)). 2 disulfides stabilise this stretch: Cys119-Cys207 and Cys186-Cys199.

Its subcellular location is the membrane. The chain is Killer cell lectin-like receptor subfamily B member 1 (Klrb1) from Rattus norvegicus (Rat).